We begin with the raw amino-acid sequence, 314 residues long: tRNA pseudouridine synthase B (314 aa).

H43 serves as a coordination point for substrate. The active-site Nucleophile is D48. Residues Y76, Y179, and L200 each contribute to the substrate site.

The protein belongs to the pseudouridine synthase TruB family. Type 1 subfamily.

It catalyses the reaction uridine(55) in tRNA = pseudouridine(55) in tRNA. In terms of biological role, responsible for synthesis of pseudouridine from uracil-55 in the psi GC loop of transfer RNAs. The sequence is that of tRNA pseudouridine synthase B from Cronobacter sakazakii (strain ATCC BAA-894) (Enterobacter sakazakii).